Consider the following 495-residue polypeptide: ATP synthase subunit beta, chloroplastic (495 aa).

172–179 is an ATP binding site; the sequence is GGAGVGKT.

Belongs to the ATPase alpha/beta chains family. F-type ATPases have 2 components, CF(1) - the catalytic core - and CF(0) - the membrane proton channel. CF(1) has five subunits: alpha(3), beta(3), gamma(1), delta(1), epsilon(1). CF(0) has four main subunits: a(1), b(1), b'(1) and c(9-12).

Its subcellular location is the plastid. It localises to the chloroplast thylakoid membrane. The catalysed reaction is ATP + H2O + 4 H(+)(in) = ADP + phosphate + 5 H(+)(out). Its function is as follows. Produces ATP from ADP in the presence of a proton gradient across the membrane. The catalytic sites are hosted primarily by the beta subunits. The sequence is that of ATP synthase subunit beta, chloroplastic from Barnardia japonica (Chinese squill).